Here is a 583-residue protein sequence, read N- to C-terminus: Isocitrate dehydrogenase kinase/phosphatase (583 aa).

Residues 315 to 321 (APGIRGM) and Lys-336 each bind ATP. Asp-371 is an active-site residue.

This sequence belongs to the AceK family.

The protein localises to the cytoplasm. The enzyme catalyses L-seryl-[isocitrate dehydrogenase] + ATP = O-phospho-L-seryl-[isocitrate dehydrogenase] + ADP + H(+). In terms of biological role, bifunctional enzyme which can phosphorylate or dephosphorylate isocitrate dehydrogenase (IDH) on a specific serine residue. This is a regulatory mechanism which enables bacteria to bypass the Krebs cycle via the glyoxylate shunt in response to the source of carbon. When bacteria are grown on glucose, IDH is fully active and unphosphorylated, but when grown on acetate or ethanol, the activity of IDH declines drastically concomitant with its phosphorylation. This is Isocitrate dehydrogenase kinase/phosphatase from Salmonella dublin (strain CT_02021853).